Consider the following 578-residue polypeptide: Malonate--CoA ligase ACSF3, mitochondrial (578 aa).

The N-terminal 19 residues, 1–19, are a transit peptide targeting the mitochondrion; sequence MRVGAFLGRSLFSCSHVRG. 205 to 213 serves as a coordination point for ATP; that stretch reads TSGTTGRPK. The segment at 394–413 is disordered; the sequence is QNPRKEGTSYTTHAQGDSTG. Positions 459, 473, and 565 each coordinate ATP.

Belongs to the ATP-dependent AMP-binding enzyme family.

The protein localises to the mitochondrion. It catalyses the reaction tetracosanoate + ATP + CoA = tetracosanoyl-CoA + AMP + diphosphate. The enzyme catalyses malonate + ATP + CoA = malonyl-CoA + AMP + diphosphate. Catalyzes the initial reaction in intramitochondrial fatty acid synthesis, by activating malonate and methylmalonate, but not acetate, into their respective CoA thioester. May have some preference toward very-long-chain substrates. In Xenopus laevis (African clawed frog), this protein is Malonate--CoA ligase ACSF3, mitochondrial.